The chain runs to 380 residues: Queuine tRNA-ribosyltransferase (380 aa).

The Proton acceptor role is filled by D95. Substrate is bound by residues 95 to 99 (DSGGF), D149, Q192, and G219. The tract at residues 250–256 (GVGSPDS) is RNA binding. Catalysis depends on D269, which acts as the Nucleophile. Residues 274 to 278 (TRIGR) form an RNA binding; important for wobble base 34 recognition region. The Zn(2+) site is built by C307, C309, C312, and H338.

The protein belongs to the queuine tRNA-ribosyltransferase family. In terms of assembly, homodimer. Within each dimer, one monomer is responsible for RNA recognition and catalysis, while the other monomer binds to the replacement base PreQ1. Zn(2+) is required as a cofactor.

It carries out the reaction 7-aminomethyl-7-carbaguanine + guanosine(34) in tRNA = 7-aminomethyl-7-carbaguanosine(34) in tRNA + guanine. Its pathway is tRNA modification; tRNA-queuosine biosynthesis. Catalyzes the base-exchange of a guanine (G) residue with the queuine precursor 7-aminomethyl-7-deazaguanine (PreQ1) at position 34 (anticodon wobble position) in tRNAs with GU(N) anticodons (tRNA-Asp, -Asn, -His and -Tyr). Catalysis occurs through a double-displacement mechanism. The nucleophile active site attacks the C1' of nucleotide 34 to detach the guanine base from the RNA, forming a covalent enzyme-RNA intermediate. The proton acceptor active site deprotonates the incoming PreQ1, allowing a nucleophilic attack on the C1' of the ribose to form the product. After dissociation, two additional enzymatic reactions on the tRNA convert PreQ1 to queuine (Q), resulting in the hypermodified nucleoside queuosine (7-(((4,5-cis-dihydroxy-2-cyclopenten-1-yl)amino)methyl)-7-deazaguanosine). This Geobacillus kaustophilus (strain HTA426) protein is Queuine tRNA-ribosyltransferase.